The sequence spans 239 residues: Enolase-phosphatase E1 (239 aa).

This sequence belongs to the HAD-like hydrolase superfamily. MasA/MtnC family. Monomer. It depends on Mg(2+) as a cofactor.

It carries out the reaction 5-methylsulfanyl-2,3-dioxopentyl phosphate + H2O = 1,2-dihydroxy-5-(methylsulfanyl)pent-1-en-3-one + phosphate. Its pathway is amino-acid biosynthesis; L-methionine biosynthesis via salvage pathway; L-methionine from S-methyl-5-thio-alpha-D-ribose 1-phosphate: step 3/6. It participates in amino-acid biosynthesis; L-methionine biosynthesis via salvage pathway; L-methionine from S-methyl-5-thio-alpha-D-ribose 1-phosphate: step 4/6. Bifunctional enzyme that catalyzes the enolization of 2,3-diketo-5-methylthiopentyl-1-phosphate (DK-MTP-1-P) into the intermediate 2-hydroxy-3-keto-5-methylthiopentenyl-1-phosphate (HK-MTPenyl-1-P), which is then dephosphorylated to form the acireductone 1,2-dihydroxy-3-keto-5-methylthiopentene (DHK-MTPene). The chain is Enolase-phosphatase E1 from Streptomyces avermitilis (strain ATCC 31267 / DSM 46492 / JCM 5070 / NBRC 14893 / NCIMB 12804 / NRRL 8165 / MA-4680).